We begin with the raw amino-acid sequence, 491 residues long: Myocilin (491 aa).

An N-terminal signal peptide occupies residues 1 to 18 (MPAVQLLLLACPVWDVGA). An N-linked (GlcNAc...) asparagine glycan is attached at N43. Residues 98-171 (QETPEGLQRE…QEVARLRRGQ (74 aa)) are a coiled coil. The interval 151–189 (ENLARRLESSSQEVARLRRGQCPQTRDTARDVPPGSREV) is disordered. In terms of domain architecture, Olfactomedin-like spans 231-490 (GCGELVWVGE…MVTYDIKLSK (260 aa)). C232 and C420 are disulfide-bonded. D367, N415, A416, I464, and D465 together coordinate Ca(2+).

As to quaternary structure, homodimer (via N-terminus). Can also form higher oligomers. Interacts with OLFM3, FN1, NRCAM, GLDN and NFASC. Interacts (via N-terminus) with MYL2. Interacts with SFRP1, FRZB, FZD7, FZD10, FZD1 and WIF1; regulates Wnt signaling. Interacts with SNTA1; regulates muscle hypertrophy. Interacts with ERBB2 and ERBB3; activates ERBB2-ERBB3 signaling pathway. Interacts with SNCG; affects its secretion and its aggregation. Palmitoylated. In terms of processing, undergoes a calcium-dependent proteolytic cleavage at Arg-213 by CAPN2 in the endoplasmic reticulum. The result is the production of two fragments, one of 35 kDa containing the C-terminal olfactomedin-like domain, and another of 20 kDa containing the N-terminal leucine zipper-like domain. Post-translationally, glycosylated.

It localises to the secreted. Its subcellular location is the golgi apparatus. It is found in the cytoplasmic vesicle. The protein resides in the extracellular space. The protein localises to the extracellular matrix. It localises to the extracellular exosome. Its subcellular location is the mitochondrion. It is found in the mitochondrion intermembrane space. The protein resides in the mitochondrion inner membrane. The protein localises to the mitochondrion outer membrane. It localises to the rough endoplasmic reticulum. Its subcellular location is the cell projection. It is found in the cilium. The protein resides in the endoplasmic reticulum. Secreted glycoprotein regulating the activation of different signaling pathways in adjacent cells to control different processes including cell adhesion, cell-matrix adhesion, cytoskeleton organization and cell migration. Promotes substrate adhesion, spreading and formation of focal contacts. Negatively regulates cell-matrix adhesion and stress fiber assembly through Rho protein signal transduction. Modulates the organization of actin cytoskeleton by stimulating the formation of stress fibers through interactions with components of Wnt signaling pathways. Promotes cell migration through activation of PTK2 and the downstream phosphatidylinositol 3-kinase signaling. Plays a role in bone formation and promotes osteoblast differentiation in a dose-dependent manner through mitogen-activated protein kinase signaling. Mediates myelination in the peripheral nervous system through ERBB2/ERBB3 signaling. Plays a role as a regulator of muscle hypertrophy through the components of dystrophin-associated protein complex. Involved in positive regulation of mitochondrial depolarization. Plays a role in neurite outgrowth. May participate in the obstruction of fluid outflow in the trabecular meshwork. The protein is Myocilin (MYOC) of Macaca fascicularis (Crab-eating macaque).